Here is a 412-residue protein sequence, read N- to C-terminus: Serine hydroxymethyltransferase (412 aa).

(6S)-5,6,7,8-tetrahydrofolate-binding positions include Leu117 and 121-123; that span reads GHL. Lys226 is subject to N6-(pyridoxal phosphate)lysine. 349–351 is a (6S)-5,6,7,8-tetrahydrofolate binding site; sequence SPF.

This sequence belongs to the SHMT family. As to quaternary structure, homodimer. Requires pyridoxal 5'-phosphate as cofactor.

It is found in the cytoplasm. The catalysed reaction is (6R)-5,10-methylene-5,6,7,8-tetrahydrofolate + glycine + H2O = (6S)-5,6,7,8-tetrahydrofolate + L-serine. It participates in one-carbon metabolism; tetrahydrofolate interconversion. Its pathway is amino-acid biosynthesis; glycine biosynthesis; glycine from L-serine: step 1/1. Its function is as follows. Catalyzes the reversible interconversion of serine and glycine with tetrahydrofolate (THF) serving as the one-carbon carrier. This reaction serves as the major source of one-carbon groups required for the biosynthesis of purines, thymidylate, methionine, and other important biomolecules. Also exhibits THF-independent aldolase activity toward beta-hydroxyamino acids, producing glycine and aldehydes, via a retro-aldol mechanism. In Geobacillus thermodenitrificans (strain NG80-2), this protein is Serine hydroxymethyltransferase.